The primary structure comprises 402 residues: Beta sliding clamp (402 aa).

It belongs to the beta sliding clamp family. As to quaternary structure, forms a ring-shaped head-to-tail homodimer around DNA which binds and tethers DNA polymerases and other proteins to the DNA. The DNA replisome complex has a single clamp-loading complex (3 tau and 1 each of delta, delta', psi and chi subunits) which binds 3 Pol III cores (1 core on the leading strand and 2 on the lagging strand) each with a beta sliding clamp dimer. Additional proteins in the replisome are other copies of gamma, psi and chi, Ssb, DNA helicase and RNA primase.

It localises to the cytoplasm. In terms of biological role, confers DNA tethering and processivity to DNA polymerases and other proteins. Acts as a clamp, forming a ring around DNA (a reaction catalyzed by the clamp-loading complex) which diffuses in an ATP-independent manner freely and bidirectionally along dsDNA. Initially characterized for its ability to contact the catalytic subunit of DNA polymerase III (Pol III), a complex, multichain enzyme responsible for most of the replicative synthesis in bacteria; Pol III exhibits 3'-5' exonuclease proofreading activity. The beta chain is required for initiation of replication as well as for processivity of DNA replication. The polypeptide is Beta sliding clamp (dnaN) (Mycobacterium tuberculosis (strain CDC 1551 / Oshkosh)).